The chain runs to 1032 residues: Reticulon-3 (1032 aa).

Positions M1–A24 are enriched in low complexity. The segment at M1–L61 is disordered. A2 is modified (N-acetylalanine). At A2 to T863 the chain is on the cytoplasmic side. Residue S30 is modified to Phosphoserine. The segment covering G32 to L61 has biased composition (low complexity). A phosphoserine mark is found at S229, S243, S246, S283, S316, and S453. The segment covering C545–Q568 has biased composition (basic and acidic residues). Residues C545–P617 form a disordered region. Residues T605 to P617 show a composition bias toward polar residues. S649 and S650 each carry phosphoserine. Positions N696 to K715 are enriched in basic and acidic residues. Residues N696 to F726 are disordered. A Phosphoserine modification is found at S735. One can recognise a Reticulon domain in the interval V844–E1032. The segment at residues L864 to L887 is an intramembrane region (helical). The Cytoplasmic segment spans residues S888–R947. The segment at residues L948–T968 is an intramembrane region (helical). Residues Y969–A972 lie on the Cytoplasmic side of the membrane. Positions V973–V993 form an intramembrane region, helical. The segment at I987–E1032 is interaction with FADD. The Cytoplasmic portion of the chain corresponds to Y994–E1032. The interaction with BACE1 stretch occupies residues Q1000 to D1002.

In terms of assembly, homodimer. Interacts with ATL1. Interacts with RTN4. Isoform 3 interacts with BACE1, BACE2, BCL2 and FADD. Interacts with ATL2. Interacts with TMEM33. Interacts with ZFYVE27 and with KIF5A in a ZFYVE27-dependent manner. Interacts with RIGI. Interacts with TRIM25. As to quaternary structure, (Microbial infection) Interacts with Coxsackievirus A16, enterovirus 71 and poliovirus P2C proteins. (Microbial infection) Interacts with West Nile virus protein NS4A. As to expression, isoform 3 is widely expressed, with highest levels in brain, where it is enriched in neuronal cell bodies from gray matter (at protein level). Three times more abundant in macula than in peripheral retina. Isoform 1 is expressed at high levels in brain and at low levels in skeletal muscle. Isoform 2 is only found in melanoma.

Its subcellular location is the endoplasmic reticulum membrane. The protein resides in the golgi apparatus membrane. May be involved in membrane trafficking in the early secretory pathway. Inhibits BACE1 activity and amyloid precursor protein processing. May induce caspase-8 cascade and apoptosis. May favor BCL2 translocation to the mitochondria upon endoplasmic reticulum stress. Induces the formation of endoplasmic reticulum tubules. Also acts as an inflammation-resolving regulator by interacting with both TRIM25 and RIGI, subsequently impairing RIGI 'Lys-63'-linked polyubiquitination leading to IRF3 and NF-kappa-B inhibition. In terms of biological role, (Microbial infection) Plays a positive role in viral replication and pathogenesis of enteroviruses. This Homo sapiens (Human) protein is Reticulon-3 (RTN3).